A 35-amino-acid polypeptide reads, in one-letter code: Photosystem II reaction center protein M (35 aa).

The chain crosses the membrane as a helical span at residues 7–27 (GLLATILVILVPSIFLVILYV).

It belongs to the PsbM family. PSII is composed of 1 copy each of membrane proteins PsbA, PsbB, PsbC, PsbD, PsbE, PsbF, PsbH, PsbI, PsbJ, PsbK, PsbL, PsbM, PsbT, PsbX, PsbY, PsbZ, Psb30/Ycf12, peripheral proteins PsbO, CyanoQ (PsbQ), PsbU, PsbV and a large number of cofactors. It forms dimeric complexes.

It is found in the cellular thylakoid membrane. In terms of biological role, one of the components of the core complex of photosystem II (PSII). PSII is a light-driven water:plastoquinone oxidoreductase that uses light energy to abstract electrons from H(2)O, generating O(2) and a proton gradient subsequently used for ATP formation. It consists of a core antenna complex that captures photons, and an electron transfer chain that converts photonic excitation into a charge separation. This subunit is found at the monomer-monomer interface. The chain is Photosystem II reaction center protein M from Synechococcus sp. (strain JA-3-3Ab) (Cyanobacteria bacterium Yellowstone A-Prime).